A 160-amino-acid chain; its full sequence is Small ribosomal subunit protein uS7 (160 aa).

The protein belongs to the universal ribosomal protein uS7 family. As to quaternary structure, part of the 30S ribosomal subunit. Contacts proteins S9 and S11.

In terms of biological role, one of the primary rRNA binding proteins, it binds directly to 16S rRNA where it nucleates assembly of the head domain of the 30S subunit. Is located at the subunit interface close to the decoding center, probably blocks exit of the E-site tRNA. This Rickettsia rickettsii (strain Iowa) protein is Small ribosomal subunit protein uS7.